We begin with the raw amino-acid sequence, 115 residues long: Rubredoxin (115 aa).

Positions serine 15 to threonine 66 constitute a Rubredoxin-like domain. Residues cysteine 20, cysteine 23, cysteine 53, and cysteine 56 each contribute to the Fe cation site.

The protein belongs to the rubredoxin family. It depends on Fe(3+) as a cofactor.

Its function is as follows. Rubredoxin is a small nonheme, iron protein lacking acid-labile sulfide. Its single Fe, chelated to 4 Cys, functions as an electron acceptor and may also stabilize the conformation of the molecule. Could be involved in hydrogenase-linked redox processes. The sequence is that of Rubredoxin (rub) from Synechocystis sp. (strain ATCC 27184 / PCC 6803 / Kazusa).